The primary structure comprises 468 residues: Glutamate--tRNA ligase (468 aa).

The 'HIGH' region motif lies at 8-18; the sequence is PSPTGFLHVGG. Residues cysteine 97, cysteine 99, cysteine 124, and aspartate 126 each contribute to the Zn(2+) site. The 'KMSKS' region signature appears at 236 to 240; the sequence is KLSKR. Residue lysine 239 participates in ATP binding.

It belongs to the class-I aminoacyl-tRNA synthetase family. Glutamate--tRNA ligase type 1 subfamily. Monomer. Requires Zn(2+) as cofactor.

Its subcellular location is the cytoplasm. The enzyme catalyses tRNA(Glu) + L-glutamate + ATP = L-glutamyl-tRNA(Glu) + AMP + diphosphate. In terms of biological role, catalyzes the attachment of glutamate to tRNA(Glu) in a two-step reaction: glutamate is first activated by ATP to form Glu-AMP and then transferred to the acceptor end of tRNA(Glu). This chain is Glutamate--tRNA ligase, found in Francisella tularensis subsp. novicida (strain U112).